The sequence spans 124 residues: Small ribosomal subunit protein uS12 (124 aa).

At D89 the chain carries 3-methylthioaspartic acid.

This sequence belongs to the universal ribosomal protein uS12 family. Part of the 30S ribosomal subunit. Contacts proteins S8 and S17. May interact with IF1 in the 30S initiation complex.

Functionally, with S4 and S5 plays an important role in translational accuracy. Interacts with and stabilizes bases of the 16S rRNA that are involved in tRNA selection in the A site and with the mRNA backbone. Located at the interface of the 30S and 50S subunits, it traverses the body of the 30S subunit contacting proteins on the other side and probably holding the rRNA structure together. The combined cluster of proteins S8, S12 and S17 appears to hold together the shoulder and platform of the 30S subunit. The protein is Small ribosomal subunit protein uS12 of Yersinia enterocolitica serotype O:8 / biotype 1B (strain NCTC 13174 / 8081).